The primary structure comprises 96 residues: LSM complex subunit lsm2 (96 aa).

One can recognise a Sm domain in the interval 2-76; that stretch reads LFYSFFKTLI…VRYVHMSSAY (75 aa).

This sequence belongs to the snRNP Sm proteins family. Component of the heptameric LSM1-LSM7 complex that forms a seven-membered ring structure with a donut shape. The LSm subunits are arranged in the order lsm1, lsm2, lsm3, lsm6, lsm5, lsm7 and lsm4. Component of the heptameric LSM2-LSM8 complex that forms a seven-membered ring structure with a donut shape. The LSm subunits are arranged in the order lsm8, lsm2, lsm3, lsm6, lsm5, lsm7 and lsm4.

The protein resides in the nucleus. The protein localises to the cytoplasm. Its function is as follows. Component of LSm protein complexes, which are involved in RNA processing and may function in a chaperone-like manner. Component of the cytoplasmic LSM1-LSM7 complex which is involved in mRNA degradation by activating the decapping step. The LSM1-LSM7 complex loads onto the 3'-end of single stranded RNA. Component of the nuclear LSM2-LSM8 complex, which is involved in spliceosome assembly. The LSM2-LSM8 complex plays a role in the biogenesis of the spliceosomal U4/U6-U5 tri-snRNP complex by accelerating prp24-mediated annealing of U4/U6 di-snRNA. The LSM2-LSM8 complex binds U6 snRNA terminating with a cyclic 2',3' phosphate group; RNA with an unmodified 3' hydroxyl or non-cyclic 3' phosphate is bound less tightly. The chain is LSM complex subunit lsm2 (lsm2) from Schizosaccharomyces pombe (strain 972 / ATCC 24843) (Fission yeast).